We begin with the raw amino-acid sequence, 417 residues long: Solute carrier family 25 member 46-A (417 aa).

Residues 1–13 show a composition bias toward basic and acidic residues; sequence MQPRRPDRFDGLE. Residues 1 to 90 are disordered; that stretch reads MQPRRPDRFD…AFGEENSNSA (90 aa). Over residues 31-41 the composition is skewed to low complexity; that stretch reads SSFPARSFSSS. Residues 95–186 form a Solcar 1 repeat; it reads QLNRFAGFGI…GILSEFTHLP (92 aa). Transmembrane regions (helical) follow at residues 102–122, 162–182, 198–218, 257–277, 313–333, and 382–402; these read FGIGLASLFTENVLAHPCIVL, MGSTFIVQGISLGAEGILSEF, IGGHLLLKGLVYVIVTPFYSA, LLPLLVLTFPTVLHGILHYIV, FPELIANFAASLCADVLLYPL, and LGFYKGFGAVVVQYTLHAIVL. A Solcar 2 repeat occupies 310–415; sequence EDYFPELIAN…KIIYSSVVQT (106 aa).

The protein belongs to the mitochondrial carrier (TC 2.A.29) family.

It localises to the mitochondrion outer membrane. Functionally, may play a role in mitochondrial dynamics by controlling mitochondrial membrane fission. In Xenopus laevis (African clawed frog), this protein is Solute carrier family 25 member 46-A (slc25a46-a).